A 77-amino-acid chain; its full sequence is RNA-binding protein Hfq (77 aa).

Positions 9–69 constitute a Sm domain; the sequence is DQFLNQLRKE…ISTFAPQKNV (61 aa).

This sequence belongs to the Hfq family. As to quaternary structure, homohexamer.

Functionally, RNA chaperone that binds small regulatory RNA (sRNAs) and mRNAs to facilitate mRNA translational regulation in response to envelope stress, environmental stress and changes in metabolite concentrations. Also binds with high specificity to tRNAs. This chain is RNA-binding protein Hfq, found in Shouchella clausii (strain KSM-K16) (Alkalihalobacillus clausii).